The sequence spans 200 residues: Molybdopterin synthase catalytic subunit (200 aa).

Polar residues predominate over residues 16–30 (KLPSSHQSVEDSASE). The segment at 16-43 (KLPSSHQSVEDSASEPSGYEAKDPPQDT) is disordered. Phosphoserine is present on serine 20. Residues 154 to 155 (HR), lysine 170, and 177 to 179 (KKE) contribute to the substrate site.

It belongs to the MoaE family. MOCS2B subfamily. Heterotetramer; composed of 2 small (MOCS2A) and 2 large (MOCS2B) subunits.

The protein resides in the cytoplasm. It is found in the cytosol. The catalysed reaction is 2 [molybdopterin-synthase sulfur-carrier protein]-C-terminal-Gly-aminoethanethioate + cyclic pyranopterin phosphate + H2O = molybdopterin + 2 [molybdopterin-synthase sulfur-carrier protein]-C-terminal Gly-Gly + 2 H(+). Its pathway is cofactor biosynthesis; molybdopterin biosynthesis. Functionally, catalytic subunit of the molybdopterin synthase complex, a complex that catalyzes the conversion of precursor Z into molybdopterin. Acts by mediating the incorporation of 2 sulfur atoms from thiocarboxylated MOCS2A into precursor Z to generate a dithiolene group. This chain is Molybdopterin synthase catalytic subunit, found in Rattus norvegicus (Rat).